Reading from the N-terminus, the 239-residue chain is Tumor necrosis factor ligand superfamily member 8 (239 aa).

A disordered region spans residues 1 to 36; the sequence is MEPGLQQAGSCGAPSPDPAMQVQPGSVASPWRSTRP. Residues 1–43 are Cytoplasmic-facing; the sequence is MEPGLQQAGSCGAPSPDPAMQVQPGSVASPWRSTRPWRSTSRS. Residues 44-67 form a helical; Signal-anchor for type II membrane protein membrane-spanning segment; sequence YFYLSTTALVCLVVAVAIILVLVV. The Extracellular segment spans residues 68–239; sequence QKKDSTPNTT…LSVFLYSSSD (172 aa). 6 N-linked (GlcNAc...) asparagine glycosylation sites follow: asparagine 75, asparagine 86, asparagine 114, asparagine 158, asparagine 194, and asparagine 206. Residues 103–230 enclose the THD domain; it reads SWAYLQVSKH…TNTFPLDNVL (128 aa). Cysteine 156 and cysteine 182 are joined by a disulfide.

This sequence belongs to the tumor necrosis factor family. As to quaternary structure, homotrimer.

The protein resides in the membrane. Its function is as follows. Cytokine that binds to TNFRSF8/CD30. Induces proliferation of T-cells. The chain is Tumor necrosis factor ligand superfamily member 8 (Tnfsf8) from Mus musculus (Mouse).